A 261-amino-acid polypeptide reads, in one-letter code: Shikimate dehydrogenase (NADP(+)) (261 aa).

Residues 13–15 (SLS) and Thr-60 contribute to the shikimate site. The active-site Proton acceptor is the Lys-64. NADP(+) is bound at residue Glu-76. Asn-85 and Asp-100 together coordinate shikimate. NADP(+) contacts are provided by residues 122–126 (GAGGA), 143–148 (NRTVER), and Ile-203. Tyr-205 lines the shikimate pocket. Position 226 (Gly-226) interacts with NADP(+).

This sequence belongs to the shikimate dehydrogenase family. In terms of assembly, homodimer.

The catalysed reaction is shikimate + NADP(+) = 3-dehydroshikimate + NADPH + H(+). The protein operates within metabolic intermediate biosynthesis; chorismate biosynthesis; chorismate from D-erythrose 4-phosphate and phosphoenolpyruvate: step 4/7. Functionally, involved in the biosynthesis of the chorismate, which leads to the biosynthesis of aromatic amino acids. Catalyzes the reversible NADPH linked reduction of 3-dehydroshikimate (DHSA) to yield shikimate (SA). The protein is Shikimate dehydrogenase (NADP(+)) of Exiguobacterium sp. (strain ATCC BAA-1283 / AT1b).